Consider the following 324-residue polypeptide: D-alanine--D-alanine ligase (324 aa).

In terms of domain architecture, ATP-grasp spans 116 to 311 (KQVWHTLGIP…FQQLVLAILA (196 aa)). 142–197 (ATELGFPLIVKPAHEGSSIGMAKVSSASELIDAWKAASTYDSQVLVEQWIHGPEFT) contributes to the ATP binding site. The Mg(2+) site is built by Asp-265, Glu-278, and Asn-280.

Belongs to the D-alanine--D-alanine ligase family. Mg(2+) serves as cofactor. Requires Mn(2+) as cofactor.

Its subcellular location is the cytoplasm. The catalysed reaction is 2 D-alanine + ATP = D-alanyl-D-alanine + ADP + phosphate + H(+). It functions in the pathway cell wall biogenesis; peptidoglycan biosynthesis. Cell wall formation. The chain is D-alanine--D-alanine ligase from Pseudomonas fluorescens (strain Pf0-1).